The sequence spans 37 residues: Large ribosomal subunit protein bL36 (37 aa).

This sequence belongs to the bacterial ribosomal protein bL36 family.

The sequence is that of Large ribosomal subunit protein bL36 from Syntrophotalea carbinolica (strain DSM 2380 / NBRC 103641 / GraBd1) (Pelobacter carbinolicus).